The chain runs to 62 residues: Photosystem II reaction center X protein (62 aa).

A helical transmembrane segment spans residues 26–46 (IASFFAAALLIVIPAAAFLIF).

Belongs to the PsbX family. Type 2 subfamily. PSII consists of a core antenna complex that captures photons, and an electron transfer chain that converts photonic excitation into a charge separation. PSII forms dimeric complexes.

It is found in the cellular thylakoid membrane. Involved in the binding and/or turnover of quinones at the Q(B) site of Photosystem II. The polypeptide is Photosystem II reaction center X protein (Prochlorococcus marinus subsp. pastoris (strain CCMP1986 / NIES-2087 / MED4)).